Consider the following 670-residue polypeptide: Solute carrier organic anion transporter family member 1A4 (670 aa).

The Cytoplasmic portion of the chain corresponds to 1–20 (MGKSEKEVATHGVRCFSKIK). Residues 21 to 40 (AFLLALTCAYVSKSLSGTYM) form a helical membrane-spanning segment. Residues 41-59 (NSMLTQIERQFGIPTSVVG) lie on the Extracellular side of the membrane. Residues 60 to 80 (LINGSFEIGNLLLIIFVSYFG) form a helical membrane-spanning segment. Over 81–86 (TKLHRP) the chain is Cytoplasmic. The chain crosses the membrane as a helical span at residues 87–111 (IMIGVGCAVMGLGCFLISIPHFLMG). The Extracellular segment spans residues 112 to 155 (RYEYETTILPTSNLSSNSFVCTENRTQTLKPTQDPTECVKEMKS). Residues N124 and N135 are each glycosylated (N-linked (GlcNAc...) asparagine). Residues 156–184 (LMWIYVLVGNIIRGMGETPIMPLGISYIE) traverse the membrane as a helical segment. Residues 185-203 (DFAKSENSPLYIGILETGM) lie on the Cytoplasmic side of the membrane. The helical transmembrane segment at 204–224 (TIGPLIGLLLGSSCANIYVDT) threads the bilayer. Topologically, residues 225-242 (GSVNTDDLTITPTDTRWV) are extracellular. Residues 243 to 267 (GAWWIGFLVCAGVNILTSIPFFFFP) traverse the membrane as a helical segment. Topologically, residues 268–311 (KTLLKEGLQDNGDGTENAKEEKHREKIKEENRGITKDFFLFMKS) are cytoplasmic. The helical transmembrane segment at 312–333 (LSCNPIYMIFILISVIQVNAFI) threads the bilayer. The Extracellular segment spans residues 334–353 (NSFTFMPKYLEQQYGKSTAE). Residues 354–377 (IVFLMGLYMLPPICLGYLIGGLIM) traverse the membrane as a helical segment. At 378–381 (KKFK) the chain is on the cytoplasmic side. Residues 382-405 (ITVKKAAYIGFWLSLTEYLLSFVS) traverse the membrane as a helical segment. At 406 to 513 (YIMTCDNFPV…PECANKLQYF (108 aa)) the chain is on the extracellular side. The region spanning 433-488 (NNVLADCNTKCSCLTNTWDPVCGDNGLSYMSACLAGCEKSVGTGTNMVFQNCSCIQ) is the Kazal-like domain. Disulfide bonds link C439–C469, C445–C465, and C454–C486. Residues N483 and N492 are each glycosylated (N-linked (GlcNAc...) asparagine). A helical transmembrane segment spans residues 514-536 (LIISIIGCFIFSLGAIPGYMVLL). At 537 to 545 (RCMKSEEKS) the chain is on the cytoplasmic side. The chain crosses the membrane as a helical span at residues 546–571 (LGVGLHTFCMRILGGIPAPIYFGALI). At 572–605 (DRTCLHWGTLKCGEPGACRMYDINSFRRIYLGLP) the chain is on the extracellular side. The chain crosses the membrane as a helical span at residues 606-623 (AALRGASFLPALFILILM). Over 624 to 670 (RKFQFPGDIDSSDTDPAEMKLTAKESKCTNVHRSPTMQNDGERKTKL) the chain is Cytoplasmic. Residues S634 and S635 each carry the phosphoserine modification. The interval 649-670 (SKCTNVHRSPTMQNDGERKTKL) is disordered. Over residues 651 to 662 (CTNVHRSPTMQN) the composition is skewed to polar residues.

It belongs to the organo anion transporter (TC 2.A.60) family. In terms of tissue distribution, highly expressed in brain and liver. Detected at very low levels in heart and lung.

The protein localises to the cell membrane. The catalysed reaction is estrone 3-sulfate(out) = estrone 3-sulfate(in). It carries out the reaction taurocholate(out) = taurocholate(in). It catalyses the reaction prostaglandin E2(out) = prostaglandin E2(in). The enzyme catalyses L-thyroxine(out) = L-thyroxine(in). Mediates the Na(+)-independent transport of organic anions such as taurocholate, cholate, 17-beta-glucuronosyl estradiol, prostaglandin E2, estrone 3-sulfate, L-thyroxine (T4), the cardiac glycosides ouabain and digoxin and thyroid hormones. Shows a pH-sensitive substrate specificity which may be ascribed to the protonation state of the binding site and leads to a stimulation of substrate transport in an acidic microenvironment. Hydrogencarbonate/HCO3(-) acts as the probable counteranion that exchanges for organic anions. The protein is Solute carrier organic anion transporter family member 1A4 (Slco1a4) of Mus musculus (Mouse).